We begin with the raw amino-acid sequence, 277 residues long: Proteasome assembly chaperone 1 (277 aa).

Belongs to the PSMG1 family. Forms a heterodimer with psmg2. Post-translationally, degraded by the proteasome upon completion of 20S proteasome maturation.

It is found in the cytoplasm. It localises to the endoplasmic reticulum. Chaperone protein which promotes assembly of the 20S proteasome as part of a heterodimer with psmg2. This Danio rerio (Zebrafish) protein is Proteasome assembly chaperone 1.